A 427-amino-acid polypeptide reads, in one-letter code: SAC3 domain-containing protein 1 (427 aa).

Composition is skewed to basic and acidic residues over residues 1–10 (MGRFKGENRS) and 117–127 (ADPKRTVKEYS). Disordered stretches follow at residues 1-53 (MGRF…QDAV) and 101-143 (LHRL…LLRP). Pro residues predominate over residues 134–143 (PRPPPSLLRP). In terms of domain architecture, PCI spans 229-397 (QVQEGFGSLR…EGLPPPGAYH (169 aa)). A Phosphoserine modification is found at serine 425.

Belongs to the SAC3 family. May be part of a SEM1-containing complex. In terms of tissue distribution, present in spleen cells (at protein level).

It localises to the cytoplasm. Its subcellular location is the cytoskeleton. It is found in the microtubule organizing center. The protein resides in the centrosome. The protein localises to the spindle. In terms of biological role, involved in centrosome duplication and mitotic progression. The sequence is that of SAC3 domain-containing protein 1 (Sac3d1) from Mus musculus (Mouse).